The chain runs to 200 residues: HTH-type transcriptional regulator Hpr (200 aa).

An HTH marR-type domain is found at 13-157; the sequence is AMLFSQRIAQ…MMCIVRNIYG (145 aa). A DNA-binding region (H-T-H motif) is located at residues 63–86; sequence ISEIAKFGVMHVSTAFNFSKKLEE.

Homodimer.

Functionally, negative regulator of protease production and sporulation. The protein is HTH-type transcriptional regulator Hpr of Geobacillus thermodenitrificans (strain NG80-2).